We begin with the raw amino-acid sequence, 136 residues long: Small ribosomal subunit protein uS8c (136 aa).

This sequence belongs to the universal ribosomal protein uS8 family. Part of the 30S ribosomal subunit.

The protein localises to the plastid. Its function is as follows. One of the primary rRNA binding proteins, it binds directly to 16S rRNA central domain where it helps coordinate assembly of the platform of the 30S subunit. This Helicosporidium sp. subsp. Simulium jonesii (Green alga) protein is Small ribosomal subunit protein uS8c (rps8).